The following is a 735-amino-acid chain: Serine/threonine-protein kinase BRSK2 (735 aa).

In terms of domain architecture, Protein kinase spans tyrosine 20 to tyrosine 271. ATP contacts are provided by residues leucine 26–valine 34 and lysine 49. Aspartate 142 functions as the Proton acceptor in the catalytic mechanism. Threonine 175 carries the phosphothreonine; by LKB1 modification. Threonine 261 is modified (phosphothreonine; by PKA). Position 295 is a phosphoserine (serine 295). A UBA domain is found at aspartate 298–aspartate 340. A compositionally biased stretch (basic and acidic residues) spans proline 346 to aspartate 367. Disordered regions lie at residues proline 346–tryptophan 476, phenylalanine 493–serine 514, and lysine 682–proline 735. A phosphoserine mark is found at serine 368, serine 383, serine 394, serine 413, alanine 417, serine 424, and serine 428. Residues serine 411–proline 429 show a composition bias toward low complexity. Residues threonine 432 to lysine 446 are compositionally biased toward pro residues. The residue at position 456 (serine 456) is a Phosphoserine. 3 positions are modified to phosphothreonine: threonine 460, threonine 464, and threonine 510. A phosphoserine mark is found at serine 513 and serine 514.

The protein belongs to the protein kinase superfamily. CAMK Ser/Thr protein kinase family. SNF1 subfamily. Interacts with FZR1, a regulatory subunit of the APC ubiquitin ligase complex. Interacts with COPS5. Interacts with PAK1. The cofactor is Mg(2+). May be phosphorylated at Thr-261 by PKA. Phosphorylated at Thr-175 by STK11/LKB1 in complex with STE20-related adapter-alpha (STRADA) pseudo kinase and CAB39. Not phosphorylated at Thr-175 by CaMKK2. In contrast, it is phosphorylated and activated by CaMKK1. May be inactivated via dephosphorylation of Thr-175 by PP2C. In terms of processing, polyubiquitinated by the APC complex in conjunction with FZR1, leading to its proteasomal degradation. Targeted for proteasomal degradation by interaction with COPS5. BRSK2 levels change during the cell cycle. BRSK2 levels are low at the G1/S boundary and gradually increase as cells progress into G2 phase. BRSK2 levels decrease rapidly at the end of mitosis.

The protein localises to the cytoplasm. It is found in the cytoskeleton. The protein resides in the microtubule organizing center. It localises to the centrosome. Its subcellular location is the perinuclear region. The protein localises to the endoplasmic reticulum. It carries out the reaction L-seryl-[protein] + ATP = O-phospho-L-seryl-[protein] + ADP + H(+). The catalysed reaction is L-threonyl-[protein] + ATP = O-phospho-L-threonyl-[protein] + ADP + H(+). The enzyme catalyses L-seryl-[tau protein] + ATP = O-phospho-L-seryl-[tau protein] + ADP + H(+). It catalyses the reaction L-threonyl-[tau protein] + ATP = O-phospho-L-threonyl-[tau protein] + ADP + H(+). With respect to regulation, activated by phosphorylation on Thr-175 by STK11/LKB1. Its function is as follows. Serine/threonine-protein kinase that plays a key role in polarization of neurons and axonogenesis, cell cycle progress and insulin secretion. Phosphorylates CDK16, CDC25C, MAPT/TAU, PAK1 and WEE1. Following phosphorylation and activation by STK11/LKB1, acts as a key regulator of polarization of cortical neurons, probably by mediating phosphorylation of microtubule-associated proteins such as MAPT/TAU at 'Thr-523' and 'Ser-573'. Also regulates neuron polarization by mediating phosphorylation of WEE1 at 'Ser-642' in post-mitotic neurons, leading to down-regulate WEE1 activity in polarized neurons. Plays a role in the regulation of the mitotic cell cycle progress and the onset of mitosis. Plays a role in the regulation of insulin secretion in response to elevated glucose levels, probably via phosphorylation of CDK16 and PAK1. While BRSK2 phosphorylated at Thr-175 can inhibit insulin secretion, BRSK2 phosphorylated at Thr-261 can promote insulin secretion. Regulates reorganization of the actin cytoskeleton. May play a role in the apoptotic response triggered by endoplasmic reticulum (ER) stress. In Rattus norvegicus (Rat), this protein is Serine/threonine-protein kinase BRSK2 (Brsk2).